We begin with the raw amino-acid sequence, 227 residues long: MALLPSSISASEFFTPVVLSFQVAAVAGIVVIILGTLAGAWMSRASFFGKTALETCFMLPLVLPPTVVGFILIVIFGKHSFIGQAIEWIFQQPVIFTWWAAVIASAVVAFPLMYQSAKTGFADIDPDIQGAAMVDGASRWKVFIHISVPLAYPSLLTGSILSLARALGEFGATLMFAGNIPGVTQTLPTAIYVALDSGNNTLAWAWVVCIVVISFLMLFFIQQKKTH.

A run of 5 helical transmembrane segments spans residues 17–37 (VVLSFQVAAVAGIVVIILGTL), 57–77 (FMLPLVLPPTVVGFILIVIFG), 94–114 (VIFTWWAAVIASAVVAFPLMY), 142–162 (VFIHISVPLAYPSLLTGSILS), and 201–221 (TLAWAWVVCIVVISFLMLFFI). An ABC transmembrane type-1 domain is found at 17–221 (VVLSFQVAAV…VISFLMLFFI (205 aa)).

It belongs to the binding-protein-dependent transport system permease family. CysTW subfamily.

The protein localises to the cell membrane. In terms of biological role, could be part of the binding-protein-dependent transport system for molybdenum; probably responsible for the translocation of the substrate across the membrane. This chain is Putative molybdenum transport system permease protein YvgM (yvgM), found in Bacillus subtilis (strain 168).